The sequence spans 449 residues: FAD-linked oxidoreductase janO (449 aa).

The FAD-binding PCMH-type domain maps to Pro32 to Leu203.

The protein belongs to the oxygen-dependent FAD-linked oxidoreductase family. The cofactor is FAD.

Its pathway is secondary metabolite biosynthesis. FAD-linked oxidoreductase; part of the gene cluster that mediates the biosynthesis of the indole diterpenes janthitremanes such as shearinine K or shearinine A. The geranylgeranyl diphosphate (GGPP) synthase janG catalyzes the first step in janthitremane biosynthesis via conversion of farnesyl pyrophosphate and isopentyl pyrophosphate into geranylgeranyl pyrophosphate (GGPP). Condensation of indole-3-glycerol phosphate with GGPP by the prenyl transferase janC then forms 3-geranylgeranylindole (3-GGI). Epoxidation by the FAD-dependent monooxygenase janM leads to a epoxidized-GGI that is substrate of the terpene cyclase janB for cyclization to yield paspaline. Paspaline is subsequently converted to 13-desoxypaspaline by the cytochrome P450 monooxygenase janP, via beta-PC-M6 in a series of alpha-face oxidations. The cytochrome P450 monooxygenase janQ is proposed to carry out sequential beta-face oxidation steps at C-7 and C-13 of 13-desoxypaspaline to form paspalicine and paspalinine respectively. The indole diterpene prenyltransferase janD may then convert paspalinine into shearinine K which is substrate of janO and/or additional enzymes for oxidation and cyclization to generate shearinine A. This is FAD-linked oxidoreductase janO from Penicillium janthinellum (Penicillium vitale).